We begin with the raw amino-acid sequence, 428 residues long: Histidine--tRNA ligase (428 aa).

It belongs to the class-II aminoacyl-tRNA synthetase family. In terms of assembly, homodimer.

Its subcellular location is the cytoplasm. The catalysed reaction is tRNA(His) + L-histidine + ATP = L-histidyl-tRNA(His) + AMP + diphosphate + H(+). The protein is Histidine--tRNA ligase of Chlamydia trachomatis serovar A (strain ATCC VR-571B / DSM 19440 / HAR-13).